We begin with the raw amino-acid sequence, 496 residues long: E3 ubiquitin-protein ligase Hakai (496 aa).

A disordered region spans residues 35-60; it reads PNKIKPAPRPQRNMNRIPTKPQPGFD. The RING-type; degenerate zinc-finger motif lies at 104–144; the sequence is CDKCGLPIKIYGRMIPCKHVFCYDCALMHEKKADKLCPGTL. An HYB domain region spans residues 157 to 215; that stretch reads CNDPVQRIEQCARGSLFMCSIVQGCKRTYLSQRDLQAHINHRHMRASKPTARPQPEPIH. Residues 173-199 form a C2H2-type zinc finger; it reads FMCSIVQGCKRTYLSQRDLQAHINHRH. Residues 304–314 are compositionally biased toward polar residues; sequence VPIQDDSNSGA. The tract at residues 304 to 496 is disordered; it reads VPIQDDSNSG…DQARYRPYYQ (193 aa). Composition is skewed to pro residues over residues 350–360, 380–397, and 407–430; these read APPPPPPPPIS, GPPP…PPPG, and MNHP…PPHH. The segment covering 434–449 has biased composition (polar residues); that stretch reads SSMPQFNEDQGTLSPP. Over residues 464 to 483 the composition is skewed to pro residues; the sequence is PRGPPPRMQGPPSQAPMPGP.

This sequence belongs to the Hakai family. As to quaternary structure, homodimer. Interacts with tyrosine-phosphorylated SRC substrates. Component of the WMM complex, a N6-methyltransferase complex composed of a catalytic subcomplex, named MAC, and of an associated subcomplex, named MACOM. Component of the MACOM subcomplex.

The protein resides in the nucleus speckle. Its subcellular location is the nucleus. It is found in the nucleoplasm. The catalysed reaction is S-ubiquitinyl-[E2 ubiquitin-conjugating enzyme]-L-cysteine + [acceptor protein]-L-lysine = [E2 ubiquitin-conjugating enzyme]-L-cysteine + N(6)-ubiquitinyl-[acceptor protein]-L-lysine.. It participates in protein modification; protein ubiquitination. Its function is as follows. E3 ubiquitin-protein ligase that mediates ubiquitination of several tyrosine-phosphorylated Src substrates. Associated component of the WMM complex, a complex that mediates N6-methyladenosine (m6A) methylation of RNAs, a modification that plays a role in the efficiency of mRNA splicing and RNA processing. The chain is E3 ubiquitin-protein ligase Hakai from Xenopus laevis (African clawed frog).